A 434-amino-acid polypeptide reads, in one-letter code: SPARC-related modular calcium-binding protein 1 (434 aa).

Positions 1–26 (MLPARCARLLTPHLLLVLVQLSPARG) are cleaved as a signal peptide. In terms of domain architecture, Kazal-like spans 37-89 (SDRDPQCNLHCSRTQPKPICASDGRSYESMCEYQRAKCRDPTLGVVHRGRCKD). Intrachain disulfides connect C43–C74, C47–C67, C56–C87, C95–C118, C129–C136, and C138–C158. One can recognise a Thyroglobulin type-1 1 domain in the interval 92–158 (QSKCRLERAQ…SSVQNKTPVC (67 aa)). Over residues 149–172 (SSVQNKTPVCSGSVTDKPLSQGNS) the composition is skewed to polar residues. A disordered region spans residues 149-191 (SSVQNKTPVCSGSVTDKPLSQGNSGRKDDGSKPTPTMETQPVF). N-linked (GlcNAc...) asparagine glycosylation is present at N214. In terms of domain architecture, Thyroglobulin type-1 2 spans 224 to 292 (VYSCDQERQS…TSTRYVMPSC (69 aa)). Intrachain disulfides connect C227-C251, C262-C269, and C271-C292. EF-hand domains are found at residues 359–394 (LEER…VKKK) and 396–431 (KPKK…SKEG). Ca(2+)-binding residues include D372, N374, S376, D378, E383, D409, N411, D413, and E420. N374 carries N-linked (GlcNAc...) asparagine glycosylation.

Glycosylated. Widely expressed in many tissues with a strongest signal in ovary. No expression in spleen.

It localises to the secreted. Its subcellular location is the extracellular space. The protein localises to the extracellular matrix. It is found in the basement membrane. Functionally, plays essential roles in both eye and limb development. Probable regulator of osteoblast differentiation. In Homo sapiens (Human), this protein is SPARC-related modular calcium-binding protein 1 (SMOC1).